A 184-amino-acid polypeptide reads, in one-letter code: MKMDADSSGTEHRDSRGSRSRSWREREHHGRTSERDSRKKEHKIPYFADEVREQDRIRSLRQRAHQSTRRTRSRSRSQSSDRGSRHRRHRQRSRSRNRSRSRSSERRRRQRSPHRYNPPPKIINYYVQVPPQDFYGMPGMRQSFGYQRLPRPPPFPPAPFRYRQRQPFMGAPRFGYRNAGRPPY.

2 stretches are compositionally biased toward basic and acidic residues: residues 1–39 (MKMDADSSGTEHRDSRGSRSRSWREREHHGRTSERDSRK) and 49–58 (DEVREQDRIR). 2 disordered regions span residues 1-123 (MKMD…PKII) and 146-184 (YQRLPRPPPFPPAPFRYRQRQPFMGAPRFGYRNAGRPPY). Composition is skewed to basic residues over residues 59-75 (SLRQRAHQSTRRTRSRS) and 84-114 (SRHRRHRQRSRSRNRSRSRSSERRRRQRSPH). Over residues 150–159 (PRPPPFPPAP) the composition is skewed to pro residues.

It localises to the nucleus speckle. Its function is as follows. Member of the regulatory pathway controlling female somatic sexual differentiation, regulated by Sxl. Activates dsx female-specific splicing by promoting the formation of a splicing enhancer complex which consists of tra, tra2 and sr proteins. The protein is Female-specific protein transformer (tra) of Drosophila simulans (Fruit fly).